We begin with the raw amino-acid sequence, 67 residues long: Small ribosomal subunit protein eS17 (67 aa).

Belongs to the eukaryotic ribosomal protein eS17 family.

This is Small ribosomal subunit protein eS17 from Thermococcus sibiricus (strain DSM 12597 / MM 739).